The sequence spans 56 residues: Large ribosomal subunit protein bL32 (56 aa).

Residues 1 to 16 (MAVQKSKKSRAARGMR) are compositionally biased toward basic residues. The tract at residues 1 to 22 (MAVQKSKKSRAARGMRRSHDAL) is disordered.

Belongs to the bacterial ribosomal protein bL32 family.

This Photobacterium profundum (strain SS9) protein is Large ribosomal subunit protein bL32.